The following is a 666-amino-acid chain: Non-receptor tyrosine-protein kinase TNK1 (666 aa).

Ser-60 and Ser-96 each carry phosphoserine. The Protein kinase domain maps to 116 to 377 (VCRGELLGSG…PSFSHLEGLL (262 aa)). Residues 122–130 (LGSGCFGVV) and Lys-148 contribute to the ATP site. Asp-245 acts as the Proton acceptor in catalysis. Phosphoserine occurs at positions 255 and 411. Positions 380-445 (AGPSEACCVR…PASAVTLADA (66 aa)) constitute an SH3 domain. A disordered region spans residues 446–493 (GGLPATRPVHRGTPARGDQHPGSIDGDRKKANLWDAPPARGQRRNMPL). The residue at position 502 (Ser-502) is a Phosphoserine. The tract at residues 506–579 (VLSLGPRPTG…MGMPGARKAA (74 aa)) is disordered. Thr-514 carries the post-translational modification Phosphothreonine. Position 519 is a phosphoserine (Ser-519). Residues 531–541 (QGPPGLPPRPP) are compositionally biased toward pro residues. A compositionally biased stretch (low complexity) spans 542-552 (LSSSSPQPSQP). Ser-582 carries the post-translational modification Phosphoserine.

It belongs to the protein kinase superfamily. Tyr protein kinase family. Interacts with the SH3 domain of PLCG1 via its Pro-rich domain. In terms of processing, autophosphorylated on tyrosine residues. Expressed in all umbilical cord blood, bone marrow and adult blood cell sub-populations and in several leukemia cell lines. Highly expressed in fetal blood, brain, lung, liver and kidney. Detected at lower levels in adult prostate, testis, ovary, small intestine and colon. Not expressed in adult lung, liver, kidney or brain.

Its subcellular location is the cytoplasm. The protein localises to the membrane. The enzyme catalyses L-tyrosyl-[protein] + ATP = O-phospho-L-tyrosyl-[protein] + ADP + H(+). Functionally, involved in negative regulation of cell growth. Has tumor suppressor properties. Plays a negative regulatory role in the Ras-MAPK pathway. May function in signaling pathways utilized broadly during fetal development and more selectively in adult tissues and in cells of the lymphohematopoietic system. Could specifically be involved in phospholipid signal transduction. The protein is Non-receptor tyrosine-protein kinase TNK1 of Homo sapiens (Human).